The following is a 315-amino-acid chain: piRNA biogenesis protein EXD1 (315 aa).

One can recognise a 3'-5' exonuclease domain in the interval 141–228; the sequence is IYIFDIQVMQ…ECLTNYLGLQ (88 aa).

The protein belongs to the EXD1 family. As to quaternary structure, homodimer. Component of the PET complex, at least composed of EXD1, SIWI, TDRD12 and piRNAs.

Its subcellular location is the cytoplasm. Functionally, RNA-binding component of the PET complex, a multiprotein complex required for the processing of piRNAs during spermatogenesis. The piRNA metabolic process mediates the repression of transposable elements during meiosis by forming complexes composed of piRNAs and Piwi proteins and governs the methylation and subsequent repression of transposable elements, preventing their mobilization, which is essential for the germline integrity. The PET complex is required during the secondary piRNAs metabolic process for the PIWIL2 slicing-triggered loading of PIWIL4 piRNAs. In the PET complex, EXD1 probably acts as an RNA adapter. EXD1 is an inactive exonuclease. This Bombyx mori (Silk moth) protein is piRNA biogenesis protein EXD1.